The following is a 136-amino-acid chain: Ribosome-binding factor A (136 aa).

The disordered stretch occupies residues 116–136 (AGNHKASDEEESDDKGHEDEQ).

Belongs to the RbfA family. In terms of assembly, monomer. Binds 30S ribosomal subunits, but not 50S ribosomal subunits or 70S ribosomes.

The protein localises to the cytoplasm. In terms of biological role, one of several proteins that assist in the late maturation steps of the functional core of the 30S ribosomal subunit. Associates with free 30S ribosomal subunits (but not with 30S subunits that are part of 70S ribosomes or polysomes). Required for efficient processing of 16S rRNA. May interact with the 5'-terminal helix region of 16S rRNA. The protein is Ribosome-binding factor A of Lachnoclostridium phytofermentans (strain ATCC 700394 / DSM 18823 / ISDg) (Clostridium phytofermentans).